Consider the following 874-residue polypeptide: MTDLSKHTPMMQQYLKIKGEHPNEMVFYRMGDFYELFYDDAKKAAELLDITLTARGQSGGNPIPMAGVPFHSAEGYIARMVRAGQSIAICEQIGDPATSKGPVERKVVRIVTPGTLSDEAFLEDRRDNLLAAIYHHKEQFGFASLDISSGRFAVSELESLEALQGELQRLRPAEILISEDFPYTDILEGFTGVRRQGPWLFESDTALRVITQQLQVRDLTGFGCEDLTLAVCAAGCLLQYAKETQRTALPHIRKLTRERREDAVILDAASRRNLEIDTNLMGGQQHTLAWVMDRTATAMGARELRRWLNRPLRDVERVRQRQQAVSALLDGFHYEPVHDLLKRVGDIERILARVALRSARPRDLARLRDAFHALPELQEALKPVNSHHVVKLATVIGEYPELADLLERAIIDNPPVVIRDGGVIAEGFDEELDELRNISENAGQYLLDVETRERERTGISTLKVGYNRVHGYYIEISRAQSDQAPVDYIRRQTLKNAERFITPELKEFEDKALSAKSRALAREKGLYDDVLETVAEQLAPLQDAAQALAELDVLSNFAERATSLRFTAPEFTDQPGFDVEEGRHPVVEQLLDEPFVPNNLLMDTKRRMLVITGPNMGGKSTYMRQAALIALLAYTGSFVPANRAVLGPVDRIFTRMGSSDDIAGGRSTFMVEMTETANILHNATEHSLVLMDEVGRGTSTFDGLSLAWATAEHLAKNIRCYTLFATHYFELTQLADDLEHAVNVHLTATEHDDSIVFLHNVHDGPASQSYGLQVAKLAGVPQDVIRNAKTQLAHLEGLEAGSTPSPAPVSVNEPKPAAPTATKAASVEAVYQGDMFAMAEPSVVEQALEKLDLDGITPRDALNQLYELKGLLAK.

Gly-613–Ser-620 contacts ATP. Residues Glu-799 to Thr-820 form a disordered region.

It belongs to the DNA mismatch repair MutS family.

This protein is involved in the repair of mismatches in DNA. It is possible that it carries out the mismatch recognition step. This protein has a weak ATPase activity. In Marinobacter nauticus (strain ATCC 700491 / DSM 11845 / VT8) (Marinobacter aquaeolei), this protein is DNA mismatch repair protein MutS.